Reading from the N-terminus, the 110-residue chain is Nucleoid-associated protein RALTA_A1934 (110 aa).

The span at 88–98 (TTQEKMGSMTS) shows a compositional bias: polar residues. A disordered region spans residues 88–110 (TTQEKMGSMTSGLPLPPGFKLPF). Residues 101 to 110 (PLPPGFKLPF) show a composition bias toward pro residues.

Belongs to the YbaB/EbfC family. In terms of assembly, homodimer.

The protein resides in the cytoplasm. The protein localises to the nucleoid. Binds to DNA and alters its conformation. May be involved in regulation of gene expression, nucleoid organization and DNA protection. The polypeptide is Nucleoid-associated protein RALTA_A1934 (Cupriavidus taiwanensis (strain DSM 17343 / BCRC 17206 / CCUG 44338 / CIP 107171 / LMG 19424 / R1) (Ralstonia taiwanensis (strain LMG 19424))).